Here is a 987-residue protein sequence, read N- to C-terminus: Mediator of RNA polymerase II transcription subunit 24 (987 aa).

Short sequence motifs (LXXLL motif) lie at residues 128-132, 344-348, 446-450, 555-559, 786-790, and 855-859; these read LHWLL, LTPLL, LDLLL, LVALL, LPGLL, and LMRLL. Phosphoserine occurs at positions 860 and 871.

It belongs to the Mediator complex subunit 24 family. As to quaternary structure, component of the Mediator complex, which is composed of MED1, MED4, MED6, MED7, MED8, MED9, MED10, MED11, MED12, MED13, MED13L, MED14, MED15, MED16, MED17, MED18, MED19, MED20, MED21, MED22, MED23, MED24, MED25, MED26, MED27, MED29, MED30, MED31, CCNC, CDK8 and CDC2L6/CDK11. The MED12, MED13, CCNC and CDK8 subunits form a distinct module termed the CDK8 module. Mediator containing the CDK8 module is less active than Mediator lacking this module in supporting transcriptional activation. Individual preparations of the Mediator complex lacking one or more distinct subunits have been variously termed ARC, CRSP, DRIP, PC2, SMCC and TRAP. Interacts with AR.

It is found in the nucleus. In terms of biological role, component of the Mediator complex, a coactivator involved in the regulated transcription of nearly all RNA polymerase II-dependent genes. Mediator functions as a bridge to convey information from gene-specific regulatory proteins to the basal RNA polymerase II transcription machinery. Mediator is recruited to promoters by direct interactions with regulatory proteins and serves as a scaffold for the assembly of a functional preinitiation complex with RNA polymerase II and the general transcription factors. The polypeptide is Mediator of RNA polymerase II transcription subunit 24 (Med24) (Rattus norvegicus (Rat)).